The sequence spans 201 residues: uncharacterized protein (201 aa).

Coiled coils occupy residues 3 to 43 (YMDD…EVYK) and 76 to 120 (TGQV…AKTK).

This is an uncharacterized protein from Archaeoglobus fulgidus (strain ATCC 49558 / DSM 4304 / JCM 9628 / NBRC 100126 / VC-16).